The sequence spans 163 residues: Large ribosomal subunit protein uL15 (163 aa).

Over residues 27-37 (SGLGKTAGRGQ) the composition is skewed to gly residues. The disordered stretch occupies residues 27–46 (SGLGKTAGRGQKGQKSRSGV).

This sequence belongs to the universal ribosomal protein uL15 family. As to quaternary structure, part of the 50S ribosomal subunit.

Its function is as follows. Binds to the 23S rRNA. The polypeptide is Large ribosomal subunit protein uL15 (Zymomonas mobilis subsp. mobilis (strain ATCC 31821 / ZM4 / CP4)).